A 417-amino-acid polypeptide reads, in one-letter code: Serine hydroxymethyltransferase 1 (417 aa).

(6S)-5,6,7,8-tetrahydrofolate contacts are provided by residues L121 and 125-127 (GHL). K229 bears the N6-(pyridoxal phosphate)lysine mark. Position 354–356 (354–356 (SPF)) interacts with (6S)-5,6,7,8-tetrahydrofolate.

This sequence belongs to the SHMT family. Homodimer. It depends on pyridoxal 5'-phosphate as a cofactor.

The protein resides in the cytoplasm. The enzyme catalyses (6R)-5,10-methylene-5,6,7,8-tetrahydrofolate + glycine + H2O = (6S)-5,6,7,8-tetrahydrofolate + L-serine. The protein operates within one-carbon metabolism; tetrahydrofolate interconversion. It participates in amino-acid biosynthesis; glycine biosynthesis; glycine from L-serine: step 1/1. In terms of biological role, catalyzes the reversible interconversion of serine and glycine with tetrahydrofolate (THF) serving as the one-carbon carrier. This reaction serves as the major source of one-carbon groups required for the biosynthesis of purines, thymidylate, methionine, and other important biomolecules. Also exhibits THF-independent aldolase activity toward beta-hydroxyamino acids, producing glycine and aldehydes, via a retro-aldol mechanism. This chain is Serine hydroxymethyltransferase 1, found in Pseudomonas savastanoi pv. phaseolicola (strain 1448A / Race 6) (Pseudomonas syringae pv. phaseolicola (strain 1448A / Race 6)).